A 264-amino-acid chain; its full sequence is Glutamate racemase (264 aa).

Substrate is bound by residues 10–11 (DS) and 42–43 (YG). Cys73 (proton donor/acceptor) is an active-site residue. 74–75 (NT) is a binding site for substrate. Residue Cys183 is the Proton donor/acceptor of the active site. 184–185 (TH) is a binding site for substrate.

Belongs to the aspartate/glutamate racemases family.

It carries out the reaction L-glutamate = D-glutamate. It participates in cell wall biogenesis; peptidoglycan biosynthesis. Its function is as follows. Provides the (R)-glutamate required for cell wall biosynthesis. This chain is Glutamate racemase, found in Streptococcus sanguinis (strain SK36).